The sequence spans 60 residues: Large ribosomal subunit protein bL32 (60 aa).

It belongs to the bacterial ribosomal protein bL32 family.

This chain is Large ribosomal subunit protein bL32, found in Thermosipho melanesiensis (strain DSM 12029 / CIP 104789 / BI429).